Consider the following 125-residue polypeptide: Phosphoribosyl-AMP cyclohydrolase (125 aa).

Asp-74 is a binding site for Mg(2+). Cys-75 provides a ligand contact to Zn(2+). Mg(2+)-binding residues include Asp-76 and Asp-78. The Zn(2+) site is built by Cys-92 and Cys-99.

It belongs to the PRA-CH family. As to quaternary structure, homodimer. It depends on Mg(2+) as a cofactor. Zn(2+) is required as a cofactor.

It localises to the cytoplasm. It carries out the reaction 1-(5-phospho-beta-D-ribosyl)-5'-AMP + H2O = 1-(5-phospho-beta-D-ribosyl)-5-[(5-phospho-beta-D-ribosylamino)methylideneamino]imidazole-4-carboxamide. It participates in amino-acid biosynthesis; L-histidine biosynthesis; L-histidine from 5-phospho-alpha-D-ribose 1-diphosphate: step 3/9. Functionally, catalyzes the hydrolysis of the adenine ring of phosphoribosyl-AMP. The chain is Phosphoribosyl-AMP cyclohydrolase from Geobacter sp. (strain M21).